Reading from the N-terminus, the 117-residue chain is Eukaryotic translation initiation factor 4E-binding protein 1 (117 aa).

2 stretches are compositionally biased toward polar residues: residues 1–12 and 33–47; these read MSAGSSCSQTPS and YSTT…TTPG. The segment at 1-47 is disordered; that stretch reads MSAGSSCSQTPSRAIPTRRVALGDGVQLPPGDYSTTPGGTLFSTTPG. N-acetylserine is present on serine 2. Threonine 36 and threonine 40 each carry phosphothreonine. Serine 43 carries the post-translational modification Phosphoserine. The residue at position 45 (threonine 45) is a Phosphothreonine; by MTOR. Position 49 is a phosphothreonine (threonine 49). At tyrosine 53 the chain carries Phosphotyrosine. The short motif at 53–59 is the YXXXXLphi motif element; it reads YDRKFLM. Lysine 56 is covalently cross-linked (Glycyl lysine isopeptide (Lys-Gly) (interchain with G-Cter in ubiquitin)). Serine 64 carries the phosphoserine; by DYRK2, MAPK1, MAPK3 and MTOR modification. Positions 64–117 are disordered; sequence SPVAKTPPKDLPTIPGVTSPTSDEPPMQASQSHLHSSPEDKRAGGEESQFEMDI. A Phosphothreonine; by MTOR modification is found at threonine 69. At threonine 76 the chain carries Phosphothreonine. The segment covering 79 to 98 has biased composition (polar residues); it reads GVTSPTSDEPPMQASQSHLH. Phosphoserine is present on residues serine 82, serine 95, and serine 99. A compositionally biased stretch (basic and acidic residues) spans 99–108; it reads SSPEDKRAGG. Residue serine 100 is modified to Phosphoserine; by DYRK2. Serine 111 carries the post-translational modification Phosphoserine. The TOS motif motif lies at 113-117; sequence FEMDI.

It belongs to the eIF4E-binding protein family. As to quaternary structure, hypophosphorylated EIF4EBP1 competes with EIF4G1/EIF4G3 to interact with EIF4E; insulin stimulated MAP-kinase (MAPK1 and MAPK3) or mTORC1 phosphorylation of EIF4EBP1 causes dissociation of the complex allowing EIF4G1/EIF4G3 to bind and consequent initiation of translation. Interacts (via TOS motif) with RPTOR; promoting phosphorylation by mTORC1. In terms of processing, phosphorylated on serine and threonine residues in response to insulin, EGF and PDGF. Phosphorylation at Thr-36, Thr-45, Ser-64 and Thr-69, corresponding to the hyperphosphorylated form, is regulated by mTORC1 and abolishes binding to EIF4E. Post-translationally, ubiquitinated: when eIF4E levels are low, hypophosphorylated form is ubiquitinated by the BCR(KLHL25) complex, leading to its degradation and serving as a homeostatic mechanism to maintain translation and prevent eIF4E inhibition when eIF4E levels are low. Not ubiquitinated when hyperphosphorylated (at Thr-36, Thr-45, Ser-64 and Thr-69) or associated with eIF4E. Expressed in all tissues examined; highest levels in fat and skeletal tissue, lowest levels in kidney.

It localises to the cytoplasm. The protein localises to the nucleus. Repressor of translation initiation that regulates EIF4E activity by preventing its assembly into the eIF4F complex: hypophosphorylated form competes with EIF4G1/EIF4G3 and strongly binds to EIF4E, leading to repress translation. In contrast, hyperphosphorylated form dissociates from EIF4E, allowing interaction between EIF4G1/EIF4G3 and EIF4E, leading to initiation of translation. Mediates the regulation of protein translation by hormones, growth factors and other stimuli that signal through the MAP kinase and mTORC1 pathways. This chain is Eukaryotic translation initiation factor 4E-binding protein 1 (Eif4ebp1), found in Rattus norvegicus (Rat).